The primary structure comprises 256 residues: 1-(5-phosphoribosyl)-5-[(5-phosphoribosylamino)methylideneamino] imidazole-4-carboxamide isomerase (256 aa).

Residue Asp-8 is the Proton acceptor of the active site. The active-site Proton donor is the Asp-130.

The protein belongs to the HisA/HisF family.

Its subcellular location is the cytoplasm. It catalyses the reaction 1-(5-phospho-beta-D-ribosyl)-5-[(5-phospho-beta-D-ribosylamino)methylideneamino]imidazole-4-carboxamide = 5-[(5-phospho-1-deoxy-D-ribulos-1-ylimino)methylamino]-1-(5-phospho-beta-D-ribosyl)imidazole-4-carboxamide. It functions in the pathway amino-acid biosynthesis; L-histidine biosynthesis; L-histidine from 5-phospho-alpha-D-ribose 1-diphosphate: step 4/9. The chain is 1-(5-phosphoribosyl)-5-[(5-phosphoribosylamino)methylideneamino] imidazole-4-carboxamide isomerase from Chlorobium luteolum (strain DSM 273 / BCRC 81028 / 2530) (Pelodictyon luteolum).